Reading from the N-terminus, the 450-residue chain is UDP-N-acetylmuramoylalanine--D-glutamate ligase (450 aa).

Position 119–125 (Gly-119–Thr-125) interacts with ATP.

This sequence belongs to the MurCDEF family.

The protein localises to the cytoplasm. The enzyme catalyses UDP-N-acetyl-alpha-D-muramoyl-L-alanine + D-glutamate + ATP = UDP-N-acetyl-alpha-D-muramoyl-L-alanyl-D-glutamate + ADP + phosphate + H(+). It participates in cell wall biogenesis; peptidoglycan biosynthesis. In terms of biological role, cell wall formation. Catalyzes the addition of glutamate to the nucleotide precursor UDP-N-acetylmuramoyl-L-alanine (UMA). The chain is UDP-N-acetylmuramoylalanine--D-glutamate ligase from Bacillus anthracis (strain A0248).